The sequence spans 160 residues: Phosphopantetheine adenylyltransferase (160 aa).

Threonine 10 contributes to the substrate binding site. ATP is bound by residues threonine 10–phenylalanine 11 and histidine 18. Lysine 42, methionine 74, and arginine 88 together coordinate substrate. Residues glycine 89–arginine 91, glutamate 99, and leucine 124–serine 130 contribute to the ATP site.

The protein belongs to the bacterial CoaD family. Homohexamer. Requires Mg(2+) as cofactor.

The protein localises to the cytoplasm. The catalysed reaction is (R)-4'-phosphopantetheine + ATP + H(+) = 3'-dephospho-CoA + diphosphate. Its pathway is cofactor biosynthesis; coenzyme A biosynthesis; CoA from (R)-pantothenate: step 4/5. Its function is as follows. Reversibly transfers an adenylyl group from ATP to 4'-phosphopantetheine, yielding dephospho-CoA (dPCoA) and pyrophosphate. The protein is Phosphopantetheine adenylyltransferase of Photorhabdus laumondii subsp. laumondii (strain DSM 15139 / CIP 105565 / TT01) (Photorhabdus luminescens subsp. laumondii).